Consider the following 590-residue polypeptide: Aspartate--tRNA(Asp/Asn) ligase (590 aa).

Residue E176 participates in L-aspartate binding. Residues 200–203 (QLFK) form an aspartate region. Residues R222 and H451 each coordinate L-aspartate. Residue 222–224 (RDE) participates in ATP binding. Position 485 (E485) interacts with ATP. R492 serves as a coordination point for L-aspartate. 537 to 540 (GIDR) is an ATP binding site.

Belongs to the class-II aminoacyl-tRNA synthetase family. Type 1 subfamily. In terms of assembly, homodimer.

Its subcellular location is the cytoplasm. It catalyses the reaction tRNA(Asx) + L-aspartate + ATP = L-aspartyl-tRNA(Asx) + AMP + diphosphate. Functionally, aspartyl-tRNA synthetase with relaxed tRNA specificity since it is able to aspartylate not only its cognate tRNA(Asp) but also tRNA(Asn). Reaction proceeds in two steps: L-aspartate is first activated by ATP to form Asp-AMP and then transferred to the acceptor end of tRNA(Asp/Asn). This Ehrlichia chaffeensis (strain ATCC CRL-10679 / Arkansas) protein is Aspartate--tRNA(Asp/Asn) ligase.